The chain runs to 196 residues: GTP cyclohydrolase 1 (196 aa).

Residues Cys-86, His-89, and Cys-158 each coordinate Zn(2+).

It belongs to the GTP cyclohydrolase I family. Homomer.

It carries out the reaction GTP + H2O = 7,8-dihydroneopterin 3'-triphosphate + formate + H(+). It functions in the pathway cofactor biosynthesis; 7,8-dihydroneopterin triphosphate biosynthesis; 7,8-dihydroneopterin triphosphate from GTP: step 1/1. This is GTP cyclohydrolase 1 from Clostridium botulinum (strain Loch Maree / Type A3).